The chain runs to 456 residues: UDP-N-acetylglucosamine 1-carboxyvinyltransferase (456 aa).

34–35 is a binding site for phosphoenolpyruvate; it reads KN. Residue arginine 104 coordinates UDP-N-acetyl-alpha-D-glucosamine. Catalysis depends on cysteine 128, which acts as the Proton donor. Cysteine 128 is modified (2-(S-cysteinyl)pyruvic acid O-phosphothioketal). Residues aspartate 319 and isoleucine 341 each coordinate UDP-N-acetyl-alpha-D-glucosamine.

It belongs to the EPSP synthase family. MurA subfamily.

Its subcellular location is the cytoplasm. It carries out the reaction phosphoenolpyruvate + UDP-N-acetyl-alpha-D-glucosamine = UDP-N-acetyl-3-O-(1-carboxyvinyl)-alpha-D-glucosamine + phosphate. It functions in the pathway cell wall biogenesis; peptidoglycan biosynthesis. Functionally, cell wall formation. Adds enolpyruvyl to UDP-N-acetylglucosamine. The protein is UDP-N-acetylglucosamine 1-carboxyvinyltransferase of Prochlorococcus marinus (strain MIT 9312).